We begin with the raw amino-acid sequence, 108 residues long: Nucleoid-associated protein Bcen_6253 (108 aa).

A compositionally biased stretch (polar residues) spans 85–95 (ATSQEKMSGMT). Residues 85-108 (ATSQEKMSGMTSGLPLPPGFKLPF) form a disordered region. Residues 99-108 (PLPPGFKLPF) are compositionally biased toward pro residues.

This sequence belongs to the YbaB/EbfC family. In terms of assembly, homodimer.

The protein localises to the cytoplasm. Its subcellular location is the nucleoid. Binds to DNA and alters its conformation. May be involved in regulation of gene expression, nucleoid organization and DNA protection. The chain is Nucleoid-associated protein Bcen_6253 from Burkholderia orbicola (strain AU 1054).